The sequence spans 89 residues: Small ribosomal subunit protein uS15 (89 aa).

This sequence belongs to the universal ribosomal protein uS15 family. Part of the 30S ribosomal subunit. Forms a bridge to the 50S subunit in the 70S ribosome, contacting the 23S rRNA.

Its function is as follows. One of the primary rRNA binding proteins, it binds directly to 16S rRNA where it helps nucleate assembly of the platform of the 30S subunit by binding and bridging several RNA helices of the 16S rRNA. Functionally, forms an intersubunit bridge (bridge B4) with the 23S rRNA of the 50S subunit in the ribosome. This chain is Small ribosomal subunit protein uS15, found in Corynebacterium aurimucosum (strain ATCC 700975 / DSM 44827 / CIP 107346 / CN-1) (Corynebacterium nigricans).